Reading from the N-terminus, the 565-residue chain is NAD-dependent malic enzyme (565 aa).

Y104 (proton donor) is an active-site residue. Residue R157 coordinates NAD(+). The active-site Proton acceptor is K175. Residues E246, D247, and D270 each coordinate a divalent metal cation. The NAD(+) site is built by D270 and N418.

It belongs to the malic enzymes family. As to quaternary structure, homotetramer. Requires Mg(2+) as cofactor. Mn(2+) serves as cofactor.

It catalyses the reaction (S)-malate + NAD(+) = pyruvate + CO2 + NADH. The enzyme catalyses oxaloacetate + H(+) = pyruvate + CO2. The chain is NAD-dependent malic enzyme from Klebsiella pneumoniae (strain 342).